The primary structure comprises 356 residues: Heparan sulfate 2-O-sulfotransferase 1 (356 aa).

Residues 1-11 (MGLLRIMMPPK) lie on the Cytoplasmic side of the membrane. Residues 12-28 (LQLLAVLTFGVLMLFLE) form a helical; Signal-anchor for type II membrane protein membrane-spanning segment. Positions 24-51 (MLFLENQIQNLEESREKLERAIARHEVR) form a coiled coil. Topologically, residues 29–356 (NQIQNLEESR…FYEKIYPKSN (328 aa)) are lumenal. Positions 83, 84, 85, 86, 87, and 88 each coordinate adenosine 3',5'-bisphosphate. Asparagine 108 and asparagine 127 each carry an N-linked (GlcNAc...) asparagine glycan. Residues histidine 140 and histidine 142 contribute to the active site. Arginine 164 and serine 172 together coordinate adenosine 3',5'-bisphosphate. 2 cysteine pairs are disulfide-bonded: cysteine 201-cysteine 209 and cysteine 222-cysteine 228. Positions 279, 285, 290, and 293 each coordinate adenosine 3',5'-bisphosphate.

It belongs to the sulfotransferase 3 family. As to quaternary structure, homotrimer.

Its subcellular location is the golgi apparatus membrane. Its function is as follows. Catalyzes the transfer of a sulfo group from 3'-phospho-5'-adenylyl sulfate (PAPS) to the 2-OH position of iduronic acid (IdoA) or glucuronic acid (GlcA) within the heparan sulfate (HS) chain and participates in HS biosynthesis. In Xenopus laevis (African clawed frog), this protein is Heparan sulfate 2-O-sulfotransferase 1.